Consider the following 422-residue polypeptide: UDP-N-acetylglucosamine 1-carboxyvinyltransferase (422 aa).

22-23 (KN) contacts phosphoenolpyruvate. Residue R92 coordinates UDP-N-acetyl-alpha-D-glucosamine. Catalysis depends on C116, which acts as the Proton donor. C116 bears the 2-(S-cysteinyl)pyruvic acid O-phosphothioketal mark. Residues 121–125 (RPVDL), D307, and L329 contribute to the UDP-N-acetyl-alpha-D-glucosamine site.

It belongs to the EPSP synthase family. MurA subfamily.

The protein resides in the cytoplasm. The catalysed reaction is phosphoenolpyruvate + UDP-N-acetyl-alpha-D-glucosamine = UDP-N-acetyl-3-O-(1-carboxyvinyl)-alpha-D-glucosamine + phosphate. It functions in the pathway cell wall biogenesis; peptidoglycan biosynthesis. Its function is as follows. Cell wall formation. Adds enolpyruvyl to UDP-N-acetylglucosamine. This is UDP-N-acetylglucosamine 1-carboxyvinyltransferase from Aliarcobacter butzleri (strain RM4018) (Arcobacter butzleri).